An 80-amino-acid chain; its full sequence is Conotoxin Bt6.5 (80 aa).

An N-terminal signal peptide occupies residues 1 to 22 (MKLTCVLIIAVLFLTACQLATA). Residues 23–45 (KTYSTGRQKHRALRSTDKNIKLS) constitute a propeptide that is removed on maturation. 3 disulfides stabilise this stretch: C48–C62, C55–C66, and C61–C73.

It belongs to the conotoxin O1 superfamily. As to expression, expressed by the venom duct.

The protein localises to the secreted. Its function is as follows. When injected intracranially in mice, induces a series of symptoms such as quivering, climbing, scratching, barrel rolling and paralysis of limbs. Unexpectedly, no effect is observed on ionic currents when tested on locust DUM neuron. In Conus betulinus (Beech cone), this protein is Conotoxin Bt6.5.